The following is a 121-amino-acid chain: Acidic phospholipase A2 PLA-1 (121 aa).

7 disulfides stabilise this stretch: C26–C115, C28–C44, C43–C95, C49–C121, C50–C88, C57–C81, and C75–C86. Y27, G29, and G31 together coordinate Ca(2+). The active site involves H47. Residue D48 participates in Ca(2+) binding. The active site involves D89.

This sequence belongs to the phospholipase A2 family. Group II subfamily. D49 sub-subfamily. It depends on Ca(2+) as a cofactor. Expressed by the venom gland.

It is found in the secreted. It catalyses the reaction a 1,2-diacyl-sn-glycero-3-phosphocholine + H2O = a 1-acyl-sn-glycero-3-phosphocholine + a fatty acid + H(+). PLA2 catalyzes the calcium-dependent hydrolysis of the 2-acyl groups in 3-sn-phosphoglycerides. The chain is Acidic phospholipase A2 PLA-1 from Eristicophis macmahoni (Leaf-nosed viper).